A 671-amino-acid polypeptide reads, in one-letter code: MEPIEQQLTELRTTLRHHEYLYHVMDAPEILDAEYDRLMRELRELEAQRPDLITPDSPTQRVGAAPLTAFNQIRHEVPMLSLDNVFDEESFLAFNKRVQDRLKSTENVIWCCELKLDGLAVSILYENGVLVSAATRGDGTTGEDITSNVRTIRAIPLKLHGDNIPARLEVRGEVFLPQTGFEKINEDARRTGGKVFANPRNAAAGSLRQLDPRITAKRPLTFFCYGVGILEGGELPDTHLGRLLQFKAWGLPVSDRVTLCDSPQAVLDFYHNVEKDRPTLGFDIDGVVIKVNSLALQEQLGFVARAPRWAVAFKFPAQEQMTFVRDVEFQVGRTGAITPVARLEPVQVAGVLVSNATLHNADEIERLGLRIGDKVVIRRAGDVIPQVVNVVLSERPEETRPIVFPTHCPVCGSDVERVEGEAVTRCTGGLICGAQRKESLKHFVSRRAMDVDGMGDKIIDQLVEREYVHTPADLFRLTAGKLTGLDRMGPKSAQNVVNALEKAKATTFARFLYALGIREVGEATAAGLAAYFGTLEALQAATIDELQKVPDVGIVVATHVFNFFAEESNRDVIGQLLAEGVHWPAPVVINAQEIDSPFAGKTVVLTGSLSQMSRDDAKARLVALGAKVAGSVSKKTDLVIAGEAAGSKLAKAQELGITVIDEAEMIRLLGA.

NAD(+) is bound by residues 32–36 (DAEYD), 81–82 (SL), and E113. K115 functions as the N6-AMP-lysine intermediate in the catalytic mechanism. The NAD(+) site is built by R136, E173, K290, and K314. Zn(2+) is bound by residues C408, C411, C426, and C432. The region spanning 593 to 671 (EIDSPFAGKT…EAEMIRLLGA (79 aa)) is the BRCT domain.

It belongs to the NAD-dependent DNA ligase family. LigA subfamily. It depends on Mg(2+) as a cofactor. The cofactor is Mn(2+).

It catalyses the reaction NAD(+) + (deoxyribonucleotide)n-3'-hydroxyl + 5'-phospho-(deoxyribonucleotide)m = (deoxyribonucleotide)n+m + AMP + beta-nicotinamide D-nucleotide.. Its function is as follows. DNA ligase that catalyzes the formation of phosphodiester linkages between 5'-phosphoryl and 3'-hydroxyl groups in double-stranded DNA using NAD as a coenzyme and as the energy source for the reaction. It is essential for DNA replication and repair of damaged DNA. In Salmonella typhi, this protein is DNA ligase.